Reading from the N-terminus, the 213-residue chain is Uridine kinase (213 aa).

Residue 14 to 21 (GASASGKS) coordinates ATP.

Belongs to the uridine kinase family.

It localises to the cytoplasm. It carries out the reaction uridine + ATP = UMP + ADP + H(+). The catalysed reaction is cytidine + ATP = CMP + ADP + H(+). Its pathway is pyrimidine metabolism; CTP biosynthesis via salvage pathway; CTP from cytidine: step 1/3. The protein operates within pyrimidine metabolism; UMP biosynthesis via salvage pathway; UMP from uridine: step 1/1. The protein is Uridine kinase of Vibrio parahaemolyticus serotype O3:K6 (strain RIMD 2210633).